We begin with the raw amino-acid sequence, 544 residues long: ATP synthase subunit alpha (544 aa).

173–180 (GDRQTGKT) provides a ligand contact to ATP. The interval 513–544 (GSDGQIIGGGEPESDGEDVDVEQEQIVRQKRG) is disordered. The segment covering 524–535 (PESDGEDVDVEQ) has biased composition (acidic residues).

Belongs to the ATPase alpha/beta chains family. As to quaternary structure, F-type ATPases have 2 components, CF(1) - the catalytic core - and CF(0) - the membrane proton channel. CF(1) has five subunits: alpha(3), beta(3), gamma(1), delta(1), epsilon(1). CF(0) has three main subunits: a(1), b(2) and c(9-12). The alpha and beta chains form an alternating ring which encloses part of the gamma chain. CF(1) is attached to CF(0) by a central stalk formed by the gamma and epsilon chains, while a peripheral stalk is formed by the delta and b chains.

It localises to the cell membrane. It carries out the reaction ATP + H2O + 4 H(+)(in) = ADP + phosphate + 5 H(+)(out). In terms of biological role, produces ATP from ADP in the presence of a proton gradient across the membrane. The alpha chain is a regulatory subunit. This chain is ATP synthase subunit alpha, found in Beutenbergia cavernae (strain ATCC BAA-8 / DSM 12333 / CCUG 43141 / JCM 11478 / NBRC 16432 / NCIMB 13614 / HKI 0122).